A 350-amino-acid polypeptide reads, in one-letter code: Small ribosomal subunit biogenesis GTPase RsgA (350 aa).

Positions methionine 1–asparagine 17 are enriched in polar residues. The disordered stretch occupies residues methionine 1 to aspartate 33. In terms of domain architecture, CP-type G spans threonine 104 to phenylalanine 273. GTP-binding positions include asparagine 160 to aspartate 163 and glycine 214 to serine 222. Cysteine 297, cysteine 302, histidine 304, and cysteine 310 together coordinate Zn(2+).

It belongs to the TRAFAC class YlqF/YawG GTPase family. RsgA subfamily. As to quaternary structure, monomer. Associates with 30S ribosomal subunit, binds 16S rRNA. It depends on Zn(2+) as a cofactor.

It is found in the cytoplasm. Functionally, one of several proteins that assist in the late maturation steps of the functional core of the 30S ribosomal subunit. Helps release RbfA from mature subunits. May play a role in the assembly of ribosomal proteins into the subunit. Circularly permuted GTPase that catalyzes slow GTP hydrolysis, GTPase activity is stimulated by the 30S ribosomal subunit. In Escherichia fergusonii (strain ATCC 35469 / DSM 13698 / CCUG 18766 / IAM 14443 / JCM 21226 / LMG 7866 / NBRC 102419 / NCTC 12128 / CDC 0568-73), this protein is Small ribosomal subunit biogenesis GTPase RsgA.